The following is a 484-amino-acid chain: MKLNDIIQGLDIINVKGELNIDINNVQYDSRKVTKGTLFICIKGFVSDGHKYIKDAIEKGASAFIVEEDVAIKGCTFIKVKDTRKDMAKVADNFYNHPSQKFNVIGVTGTNGKTSITTILNEILTLNKNKVGLIGTIKIFDGEKDIVSNSTTPESIDLQYHFNNMLDNGCDYCAMEVSSHSLALNRVDETDFKLGIFTNLTPDHLDFHKDLEDYRKAKEKLFFKTTMANIINIDDEGGKKIYENIKGINVPCYTYGVDTKADFMARDIKSDSDGVSYRLITPSYEEVIFIPVPGMFTVYNTLAVIAACYVLGIPKPIYKEGLRLSNGVSGRFETVPNDKGISVIVDYAHTPDALENVLKTTQQFAEGKIISVFGCGGDRDTEKRPLMGAIGQKYSDLCIITSDNPRTEEPEAIIKDILEGIDKKKENYHVVVDREQAIAEAISMAKKDDVVIITGKGHETYQIIGKVKHHFDDKEVANECLSKM.

Serine 30 provides a ligand contact to UDP-N-acetyl-alpha-D-muramoyl-L-alanyl-D-glutamate. Position 109 to 115 (109 to 115) interacts with ATP; that stretch reads GTNGKTS. Residues 151–152, serine 178, and arginine 186 contribute to the UDP-N-acetyl-alpha-D-muramoyl-L-alanyl-D-glutamate site; that span reads TT. The residue at position 218 (lysine 218) is an N6-carboxylysine. Meso-2,6-diaminopimelate contacts are provided by residues arginine 379, 403–406, glycine 455, and glutamate 459; that span reads DNPR. The Meso-diaminopimelate recognition motif signature appears at 403–406; the sequence is DNPR.

It belongs to the MurCDEF family. MurE subfamily. Mg(2+) is required as a cofactor. In terms of processing, carboxylation is probably crucial for Mg(2+) binding and, consequently, for the gamma-phosphate positioning of ATP.

Its subcellular location is the cytoplasm. It carries out the reaction UDP-N-acetyl-alpha-D-muramoyl-L-alanyl-D-glutamate + meso-2,6-diaminopimelate + ATP = UDP-N-acetyl-alpha-D-muramoyl-L-alanyl-gamma-D-glutamyl-meso-2,6-diaminopimelate + ADP + phosphate + H(+). The protein operates within cell wall biogenesis; peptidoglycan biosynthesis. Its function is as follows. Catalyzes the addition of meso-diaminopimelic acid to the nucleotide precursor UDP-N-acetylmuramoyl-L-alanyl-D-glutamate (UMAG) in the biosynthesis of bacterial cell-wall peptidoglycan. The polypeptide is UDP-N-acetylmuramoyl-L-alanyl-D-glutamate--2,6-diaminopimelate ligase (Clostridioides difficile (strain 630) (Peptoclostridium difficile)).